The following is a 489-amino-acid chain: Cysteine--tRNA ligase (489 aa).

Residue C29 coordinates Zn(2+). Positions 31–41 (ITSYDYCHIGH) match the 'HIGH' region motif. C209, H234, and E238 together coordinate Zn(2+). Residues 266–270 (KMSKS) carry the 'KMSKS' region motif. K269 is a binding site for ATP.

It belongs to the class-I aminoacyl-tRNA synthetase family. As to quaternary structure, monomer. The cofactor is Zn(2+).

Its subcellular location is the cytoplasm. The catalysed reaction is tRNA(Cys) + L-cysteine + ATP = L-cysteinyl-tRNA(Cys) + AMP + diphosphate. This Desulfotalea psychrophila (strain LSv54 / DSM 12343) protein is Cysteine--tRNA ligase.